The following is a 357-amino-acid chain: GTPase Obg (357 aa).

In terms of domain architecture, Obg spans 1–159 (MKFVDEAFID…KSLKLELKVL (159 aa)). One can recognise an OBG-type G domain in the interval 160–334 (ADVGLLGMPN…LVQSIFQHVH (175 aa)). Residues 166–173 (GMPNAGKS), 191–195 (FTTLH), 213–216 (DIPG), 284–287 (NKLD), and 315–317 (SAL) contribute to the GTP site. Positions 173 and 193 each coordinate Mg(2+).

The protein belongs to the TRAFAC class OBG-HflX-like GTPase superfamily. OBG GTPase family. Monomer. Mg(2+) is required as a cofactor.

It localises to the cytoplasm. Its function is as follows. An essential GTPase which binds GTP, GDP and possibly (p)ppGpp with moderate affinity, with high nucleotide exchange rates and a fairly low GTP hydrolysis rate. Plays a role in control of the cell cycle, stress response, ribosome biogenesis and in those bacteria that undergo differentiation, in morphogenesis control. The polypeptide is GTPase Obg (Acidovorax sp. (strain JS42)).